Here is a 509-residue protein sequence, read N- to C-terminus: MSQRQVLQVFEQYQKARTQFVQMVAELATRPQNIETLQNAGVMSLLRTLLLDVVPTIQQTAALALGRLANYNDDLAEAVVKCDILPQLVYSLAEQNRFYKKAAAFVLRAVGKHSPQLAQAIVDCGALDTLVICLEDFDPGVKEAAAWALRYIARHNAELSQAVVDAGAVPLLVLCIQEPEIALKRIAASALSDIAKHSPELAQTVVDAGAVAHLAQMILNPDAKLKHQILSALSQVSKHSVDLAEMVVEAEIFPVVLTCLKDKDEYVKKNASTLIREIAKHTPELSQLVVNAGGVAAVIDCIGSCKGNTRLPGIMMLGYVAAHSENLAMAVIISKGVPQLSVCLSEEPEDHIKAAAAWALGQIGRHTPEHARAVAVTNTLPVLLSLYMSTESSEDLQVKSKKAIKNILQKCTYLPALEPFLYDAPPNILKHVVGQFSKVLPHDSKARRLFVTSGGLKKVQEIKAEPGSLLQEYINSINSCYPEEIVRYYSPGYSDTLLQRVDSYQPLNN.

ARM repeat units follow at residues 31–70 (PQNIETLQNAGVMSLLRTLLLDVVPTIQQTAALALGRLAN), 73–112 (DDLAEAVVKCDILPQLVYSLAEQNRFYKKAAAFVLRAVGK), 115–154 (PQLAQAIVDCGALDTLVICLEDFDPGVKEAAAWALRYIAR), 157–196 (AELSQAVVDAGAVPLLVLCIQEPEIALKRIAASALSDIAK), 199–238 (PELAQTVVDAGAVAHLAQMILNPDAKLKHQILSALSQVSK), 241–280 (VDLAEMVVEAEIFPVVLTCLKDKDEYVKKNASTLIREIAK), 325–365 (ENLA…QIGR), and 368–409 (PEHA…NILQ).

As to quaternary structure, interacts with SPAG16 and SPAG17. In terms of tissue distribution, highly expressed in testis.

It is found in the cytoplasm. The protein localises to the cytoskeleton. Its subcellular location is the cell projection. It localises to the cilium. The protein resides in the flagellum. It is found in the cilium axoneme. Its function is as follows. Important for structural integrity of the central apparatus in the sperm tail and for flagellar motility. The sequence is that of Sperm-associated antigen 6 (SPAG6) from Homo sapiens (Human).